We begin with the raw amino-acid sequence, 305 residues long: Target of rapamycin complex subunit LST8-1 (305 aa).

WD repeat units lie at residues 1-30, 33-71, 76-115, 117-156, 160-199, 209-248, and 251-292; these read MSQPSVILATASYDHTIRFWEAETGRCYRT, YPDSHVNRLEITPDKHYLAAACNPHIRLFDVNSNSPQPV, SHTNNVMAVGFQCDAKWMYSGSEDGTVKIWDLRAPGCQKE, ESVAAVNTVVLHPNQTELISGDQNGNIRVWDLRANSCSCE, EVDTAVRSLTVMWDGTMVVAANNRGTCYVWRLLRGKQTMT, AHNGHILKCLLSPANKYLATASSDKTVKIWNVDGFKLEKV, and GHQR…KVYQ.

It belongs to the WD repeat LST8 family. In terms of assembly, the target of rapamycin complex 1 (TORC1) is composed of at least RAPTOR, LST8 and TOR. Interacts with TOR. As to expression, expressed in the root central cylinder, root tips, emerging lateral roots, vasculature of cotyledons, leaf stomata, leaf stipules, anthers, pollen, filaments, and vasculature of petals and sepals.

It localises to the endosome. Component of TORC1 complex, which is an essential cell growth regulator that controls plant development. Acts by activating transcription, protein synthesis and ribosome biogenesis, and inhibiting mRNA degradation and autophagy. Involved in regulating amino acid accumulation and the synthesis of myo-inositol and raffinose during plant adaptation to long days. Involved in the regulation of plant growth and abscisic acid (ABA) accumulation. Acts as a positive regulation of the ABA biosynthetic genes ZEP, NCED3 and AAO3, and negative regulator of the ABA catabolic genes CYP707A2 and CYP707A3. The protein is Target of rapamycin complex subunit LST8-1 of Arabidopsis thaliana (Mouse-ear cress).